The chain runs to 25 residues: Growth-blocking peptide (25 aa).

A disulfide bridge connects residues C7 and C19. Q25 carries the post-translational modification Glutamine amide.

Belongs to the GBP/PSP1/paralytic peptide family. In terms of tissue distribution, hemolymph.

Biogenic peptide that prevents, in lepidopteran, the onset of metamorphosis from larva to pupa. This growth-blocking peptide has repressive activity against juvenile hormone esterase. In Cotesia kariyai (Parasitic wasp), this protein is Growth-blocking peptide.